The following is a 37-amino-acid chain: Photosystem II reaction center protein M (37 aa).

Residues 5-25 (ILAFIATALFILVPTAFLLII) traverse the membrane as a helical segment.

The protein belongs to the PsbM family. PSII is composed of 1 copy each of membrane proteins PsbA, PsbB, PsbC, PsbD, PsbE, PsbF, PsbH, PsbI, PsbJ, PsbK, PsbL, PsbM, PsbT, PsbX, PsbY, PsbZ, Psb30/Ycf12, at least 3 peripheral proteins of the oxygen-evolving complex and a large number of cofactors. It forms dimeric complexes.

Its subcellular location is the plastid. It is found in the chloroplast thylakoid membrane. One of the components of the core complex of photosystem II (PSII). PSII is a light-driven water:plastoquinone oxidoreductase that uses light energy to abstract electrons from H(2)O, generating O(2) and a proton gradient subsequently used for ATP formation. It consists of a core antenna complex that captures photons, and an electron transfer chain that converts photonic excitation into a charge separation. This subunit is found at the monomer-monomer interface. This is Photosystem II reaction center protein M from Pelargonium hortorum (Common geranium).